Consider the following 169-residue polypeptide: Diuretic hormone 44 (169 aa).

A signal peptide spans 1 to 18; it reads MILLGILASTTIIGLTSS. A propeptide spanning residues 19-96 is cleaved from the precursor; that stretch reads APLSSYERRD…ARRKQERDQR (78 aa). Positions 83-108 form a coiled coil; it reads MLELARRKQERDQRQIEENRRFLENI. Position 97 is a pyrrolidone carboxylic acid (glutamine 97). The residue at position 108 (isoleucine 108) is an Isoleucine amide. Positions 109 to 169 are excised as a propeptide; sequence GKRSVPVSDA…RVQANELRLL (61 aa).

Residues Ile-66 to Gly-109 may constitute another form of the DH44 peptide, which has not been detected yet. As to expression, expressed in brain, ventral ganglia and the retrocerebral complex (at protein level).

Its subcellular location is the secreted. Functionally, regulation of fluid secretion. The chain is Diuretic hormone 44 from Camponotus floridanus (Florida carpenter ant).